Consider the following 741-residue polypeptide: Eukaryotic translation initiation factor 3 subunit B (741 aa).

Polar residues predominate over residues 1 to 10; it reads MAPSFDTLSE. Residues 1–21 are disordered; sequence MAPSFDTLSEQDLHEEEEEEI. An RRM domain is found at 40 to 126; sequence TFIVIDGLPI…HTLAVNKLMD (87 aa). WD repeat units follow at residues 193-230, 232-289, 303-344, 514-557, and 572-610; these read AHWT…KQKQ, PHPF…RSFV, APKK…LLGK, IEKK…EKAE, and VEHY…HTFA. The segment at 696 to 723 is disordered; sequence DAYGIPEDADDAKVAKDAPPVSEDQGEA.

Belongs to the eIF-3 subunit B family. Component of the eukaryotic translation initiation factor 3 (eIF-3) complex.

The protein resides in the cytoplasm. Functionally, RNA-binding component of the eukaryotic translation initiation factor 3 (eIF-3) complex, which is involved in protein synthesis of a specialized repertoire of mRNAs and, together with other initiation factors, stimulates binding of mRNA and methionyl-tRNAi to the 40S ribosome. The eIF-3 complex specifically targets and initiates translation of a subset of mRNAs involved in cell proliferation. This is Eukaryotic translation initiation factor 3 subunit B (prt1) from Aspergillus oryzae (strain ATCC 42149 / RIB 40) (Yellow koji mold).